The chain runs to 48 residues: uncharacterized protein (48 aa).

The tract at residues methionine 1–serine 48 is disordered. The span at serine 9–valine 18 shows a compositional bias: low complexity.

This is an uncharacterized protein from Bacillus subtilis (strain 168).